Reading from the N-terminus, the 303-residue chain is Oxygen-dependent coproporphyrinogen-III oxidase (303 aa).

Serine 93 is a binding site for substrate. A divalent metal cation contacts are provided by histidine 97 and histidine 107. The active-site Proton donor is the histidine 107. 109 to 111 is a binding site for substrate; that stretch reads NIR. A divalent metal cation-binding residues include histidine 146 and histidine 176. An important for dimerization region spans residues 241-276; that stretch reads YVEFNLLLDRGTLFGIQSNGRIESILSSMPPLVKWE.

The protein belongs to the aerobic coproporphyrinogen-III oxidase family. Homodimer. The cofactor is a divalent metal cation.

The protein resides in the cytoplasm. The catalysed reaction is coproporphyrinogen III + O2 + 2 H(+) = protoporphyrinogen IX + 2 CO2 + 2 H2O. It participates in porphyrin-containing compound metabolism; protoporphyrin-IX biosynthesis; protoporphyrinogen-IX from coproporphyrinogen-III (O2 route): step 1/1. Involved in the heme biosynthesis. Catalyzes the aerobic oxidative decarboxylation of propionate groups of rings A and B of coproporphyrinogen-III to yield the vinyl groups in protoporphyrinogen-IX. The protein is Oxygen-dependent coproporphyrinogen-III oxidase of Wigglesworthia glossinidia brevipalpis.